Reading from the N-terminus, the 148-residue chain is Flavodoxin (148 aa).

The 142-residue stretch at 4-145 (VLILFGSSTG…AVSAFAEDVL (142 aa)) folds into the Flavodoxin-like domain.

Belongs to the flavodoxin family. Requires FMN as cofactor.

Low-potential electron donor to a number of redox enzymes. In Desulfovibrio desulfuricans (strain ATCC 27774 / DSM 6949 / MB), this protein is Flavodoxin.